Here is a 277-residue protein sequence, read N- to C-terminus: 4-hydroxy-3-prenylphenylpyruvate oxygenase/4-hydroxy-3-prenylbenzoate synthase (277 aa).

This sequence belongs to the aldolase class II family. Homotetramer. Fe(2+) is required as a cofactor.

The catalysed reaction is 3-dimethylallyl-4-hydroxyphenylpyruvate + O2 = 3-dimethylallyl-4-hydroxymandelate + CO2. It carries out the reaction 3-dimethylallyl-4-hydroxymandelate + O2 = 3-dimethylallyl-4-hydroxybenzoate + CO2 + H2O. It functions in the pathway antibiotic biosynthesis. With respect to regulation, activated by ascorbate. Functionally, involved in the biosynthesis of ring A of the aminocoumarin antibiotic clorobiocin. Catalyzes two consecutive oxidative decarboxylations of 3-dimethylallyl-4-hydroxyphenylpyruvate (3DMA-4HPP) to yield 3-dimethylallyl-4-hydroxybenzoate (3DMA-4HB) via the 3-dimethylallyl-4-hydroxymandelic acid (3DMA-4HMA) intermediate. This chain is 4-hydroxy-3-prenylphenylpyruvate oxygenase/4-hydroxy-3-prenylbenzoate synthase, found in Streptomyces roseochromogenus subsp. oscitans.